Here is a 209-residue protein sequence, read N- to C-terminus: Thymidylate kinase (209 aa).

11 to 18 (GIEGAGKT) provides a ligand contact to ATP.

The protein belongs to the thymidylate kinase family.

It carries out the reaction dTMP + ATP = dTDP + ADP. Its function is as follows. Phosphorylation of dTMP to form dTDP in both de novo and salvage pathways of dTTP synthesis. The chain is Thymidylate kinase (tmk) from Pasteurella multocida (strain Pm70).